The primary structure comprises 342 residues: Glucokinase (342 aa).

18–23 (GDIGGT) contacts ATP.

It belongs to the bacterial glucokinase family.

It is found in the cytoplasm. It carries out the reaction D-glucose + ATP = D-glucose 6-phosphate + ADP + H(+). This chain is Glucokinase, found in Chelativorans sp. (strain BNC1).